The primary structure comprises 319 residues: Beta-ketoacyl-[acyl-carrier-protein] synthase III (319 aa).

Residues C113 and H246 contribute to the active site. An ACP-binding region spans residues 247–251 (QANIR). The active site involves N276.

Belongs to the thiolase-like superfamily. FabH family. As to quaternary structure, homodimer.

The protein localises to the cytoplasm. It carries out the reaction malonyl-[ACP] + acetyl-CoA + H(+) = 3-oxobutanoyl-[ACP] + CO2 + CoA. Its pathway is lipid metabolism; fatty acid biosynthesis. Functionally, catalyzes the condensation reaction of fatty acid synthesis by the addition to an acyl acceptor of two carbons from malonyl-ACP. Catalyzes the first condensation reaction which initiates fatty acid synthesis and may therefore play a role in governing the total rate of fatty acid production. Possesses both acetoacetyl-ACP synthase and acetyl transacylase activities. Its substrate specificity determines the biosynthesis of branched-chain and/or straight-chain of fatty acids. This chain is Beta-ketoacyl-[acyl-carrier-protein] synthase III, found in Ehrlichia ruminantium (strain Welgevonden).